A 509-amino-acid polypeptide reads, in one-letter code: Probable glycine dehydrogenase (decarboxylating) subunit 2 (509 aa).

K278 is subject to N6-(pyridoxal phosphate)lysine.

Belongs to the GcvP family. C-terminal subunit subfamily. In terms of assembly, the glycine cleavage system is composed of four proteins: P, T, L and H. In this organism, the P 'protein' is a heterodimer of two subunits. Pyridoxal 5'-phosphate is required as a cofactor.

The catalysed reaction is N(6)-[(R)-lipoyl]-L-lysyl-[glycine-cleavage complex H protein] + glycine + H(+) = N(6)-[(R)-S(8)-aminomethyldihydrolipoyl]-L-lysyl-[glycine-cleavage complex H protein] + CO2. Functionally, the glycine cleavage system catalyzes the degradation of glycine. The P protein binds the alpha-amino group of glycine through its pyridoxal phosphate cofactor; CO(2) is released and the remaining methylamine moiety is then transferred to the lipoamide cofactor of the H protein. The sequence is that of Probable glycine dehydrogenase (decarboxylating) subunit 2 from Saccharolobus islandicus (strain Y.N.15.51 / Yellowstone #2) (Sulfolobus islandicus).